A 191-amino-acid chain; its full sequence is ATP synthase subunit delta (191 aa).

The protein belongs to the ATPase delta chain family. As to quaternary structure, F-type ATPases have 2 components, F(1) - the catalytic core - and F(0) - the membrane proton channel. F(1) has five subunits: alpha(3), beta(3), gamma(1), delta(1), epsilon(1). F(0) has three main subunits: a(1), b(2) and c(10-14). The alpha and beta chains form an alternating ring which encloses part of the gamma chain. F(1) is attached to F(0) by a central stalk formed by the gamma and epsilon chains, while a peripheral stalk is formed by the delta and b chains.

It localises to the cell inner membrane. In terms of biological role, f(1)F(0) ATP synthase produces ATP from ADP in the presence of a proton or sodium gradient. F-type ATPases consist of two structural domains, F(1) containing the extramembraneous catalytic core and F(0) containing the membrane proton channel, linked together by a central stalk and a peripheral stalk. During catalysis, ATP synthesis in the catalytic domain of F(1) is coupled via a rotary mechanism of the central stalk subunits to proton translocation. This protein is part of the stalk that links CF(0) to CF(1). It either transmits conformational changes from CF(0) to CF(1) or is implicated in proton conduction. This is ATP synthase subunit delta from Halothermothrix orenii (strain H 168 / OCM 544 / DSM 9562).